The chain runs to 540 residues: Phosphoenolpyruvate carboxykinase (ATP) (540 aa).

Residue R65 participates in substrate binding. At K87 the chain carries N6-acetyllysine. Substrate-binding residues include Y207 and K213. ATP-binding positions include K213, H232, and 248–256 (GLSGTGKTT). The Mn(2+) site is built by K213 and H232. D269 is a Mn(2+) binding site. Residues E297, R333, 449 to 450 (RI), and T455 contribute to the ATP site. R333 is a substrate binding site. Residue K523 is modified to N6-acetyllysine.

It belongs to the phosphoenolpyruvate carboxykinase (ATP) family. Monomer. It depends on Mn(2+) as a cofactor.

It is found in the cytoplasm. The enzyme catalyses oxaloacetate + ATP = phosphoenolpyruvate + ADP + CO2. It participates in carbohydrate biosynthesis; gluconeogenesis. Its function is as follows. Involved in the gluconeogenesis. Catalyzes the conversion of oxaloacetate (OAA) to phosphoenolpyruvate (PEP) through direct phosphoryl transfer between the nucleoside triphosphate and OAA. The sequence is that of Phosphoenolpyruvate carboxykinase (ATP) from Escherichia coli O45:K1 (strain S88 / ExPEC).